Consider the following 319-residue polypeptide: Acetaldehyde dehydrogenase 1 (319 aa).

The Acyl-thioester intermediate role is filled by C129. NAD(+) is bound by residues 160–168 (SAGPGTRAN) and N287.

It belongs to the acetaldehyde dehydrogenase family.

It catalyses the reaction acetaldehyde + NAD(+) + CoA = acetyl-CoA + NADH + H(+). The chain is Acetaldehyde dehydrogenase 1 from Burkholderia lata (strain ATCC 17760 / DSM 23089 / LMG 22485 / NCIMB 9086 / R18194 / 383).